The following is a 235-amino-acid chain: Phosphoribosylaminoimidazole-succinocarboxamide synthase (235 aa).

It belongs to the SAICAR synthetase family.

It carries out the reaction 5-amino-1-(5-phospho-D-ribosyl)imidazole-4-carboxylate + L-aspartate + ATP = (2S)-2-[5-amino-1-(5-phospho-beta-D-ribosyl)imidazole-4-carboxamido]succinate + ADP + phosphate + 2 H(+). It participates in purine metabolism; IMP biosynthesis via de novo pathway; 5-amino-1-(5-phospho-D-ribosyl)imidazole-4-carboxamide from 5-amino-1-(5-phospho-D-ribosyl)imidazole-4-carboxylate: step 1/2. This chain is Phosphoribosylaminoimidazole-succinocarboxamide synthase, found in Prosthecochloris aestuarii (strain DSM 271 / SK 413).